We begin with the raw amino-acid sequence, 248 residues long: Triosephosphate isomerase (248 aa).

Residue Asn-9 to Lys-11 coordinates substrate. His-94 (electrophile) is an active-site residue. Glu-166 serves as the catalytic Proton acceptor. Substrate is bound by residues Gly-172, Ser-212, and Gly-233–Gly-234.

This sequence belongs to the triosephosphate isomerase family. In terms of assembly, homodimer.

It is found in the cytoplasm. The catalysed reaction is D-glyceraldehyde 3-phosphate = dihydroxyacetone phosphate. The protein operates within carbohydrate biosynthesis; gluconeogenesis. Its pathway is carbohydrate degradation; glycolysis; D-glyceraldehyde 3-phosphate from glycerone phosphate: step 1/1. In terms of biological role, involved in the gluconeogenesis. Catalyzes stereospecifically the conversion of dihydroxyacetone phosphate (DHAP) to D-glyceraldehyde-3-phosphate (G3P). This chain is Triosephosphate isomerase, found in Alkaliphilus oremlandii (strain OhILAs) (Clostridium oremlandii (strain OhILAs)).